A 787-amino-acid chain; its full sequence is MMLRLSVKKRCMSRTIPRISGLQGSIYSSRNIFVVRSQKGKPTLRKSKGSNDGGAVNNKEKLSEWVDSDFERKMKQQEVEYERRLKELKSLTASVARIIKKKEDIEKLQEIPMPSEVNRDAEKIYGSLEVGKEKLASLPENSPSLSGIEKQPEPFNASNHSLITPAIDMPESITKRLGLAIKFLVSKTNINWTMVLQQLKEGGGFQGLPERDIRMFIYSIPKEQISHLIPVLEQLLEEGNVKKSSKIINVFIAGLSHGGYLSDESIAQIEQYCNHITKINKKGKLSRETYELMIQAYGKNNNLEKINMCLSEMKQNKLEPSQKTFSNILSTCVYKANDHKQAVEIFDSMKFLSQKTKPDTRAYQDIIVSYVNNDNIEKALDLYREMITEKIEINQRIMVALARGCTSRPELRFKAWDFIFDIYNNNWEPTLNTFEYMLYLSAKDGDVALSRAFYSKLNESNAITPRSFSFLLLAYSKSQVSQPGQSIELPPITFHEKGRNFRRNILSDVNLFPASAQNGIPFLPVLDLTSKEEIMAESSAMWAHTLMFNPSFVNTDCANTFLNIAAVMGRLNDFIDRYDSSTFLDRTGLSNDTRIIIEELPDSISSNTDISQTDGESVSSVQSKFDEMSITKSPLLKDVGSNIGLGNRKISRTSLSYVIALKAAARFKNYKFAQRIWSERGTFRKTSNFKDLSRSTKDALDFQFANAMVSCLTKMNLLDDALAILLSTEYQFKWTWKELRELYQAASDIDHSDACKSIRGIAKRAQINYEGKIRRKDFKRYVMERGY.

Residues 1–12 constitute a mitochondrion transit peptide; that stretch reads MMLRLSVKKRCM. Residues 38–48 are compositionally biased toward basic residues; the sequence is QKGKPTLRKSK. The segment at 38-58 is disordered; that stretch reads QKGKPTLRKSKGSNDGGAVNN. PPR repeat units follow at residues 286–320, 321–356, and 359–393; these read SRETYELMIQAYGKNNNLEKINMCLSEMKQNKLEP, SQKTFSNILSTCVYKANDHKQAVEIFDSMKFLSQKT, and DTRAYQDIIVSYVNNDNIEKALDLYREMITEKIEI.

Belongs to the CCM1 family. In terms of assembly, binds to mitochondrial small subunit 15S rRNA.

It is found in the mitochondrion. Its function is as follows. Regulates mitochondrial small subunit maturation by controlling 15S rRNA 5'-end processing. Localizes to the 5' precursor of the 15S rRNA in a position that is subsequently occupied by mS47 in the mature yeast mtSSU. Uses structure and sequence-specific RNA recognition, binding to a single-stranded region of the precursor and specifically recognizing bases -6 to -1. The exchange of Ccm1 for mS47 is coupled to the irreversible removal of precursor rRNA that is accompanied by conformational changes of the mitoribosomal proteins uS5m and mS26. These conformational changes signal completion of 5'-end rRNA processing through protection of the mature 5'-end of the 15S rRNA and stabilization of mS47. The removal of the 5' precursor together with the dissociation of Ccm1 may be catalyzed by the 5'-3' exoribonuclease Pet127. Involved in the specific removal of group I introns in mitochondrial encoded transcripts. This Debaryomyces hansenii (strain ATCC 36239 / CBS 767 / BCRC 21394 / JCM 1990 / NBRC 0083 / IGC 2968) (Yeast) protein is Mitochondrial 15S rRNA processing factor CCM1 (CCM1).